We begin with the raw amino-acid sequence, 386 residues long: Vacuolar protein-sorting-associated protein 36 (386 aa).

The GLUE N-terminal domain maps to 1–88; it reads MDRFVWTSGL…SAKIVVHLHP (88 aa). The GLUE C-terminal domain occupies 105–138; sequence YIKLSFKEHGQIEFYRRLSEEMTQRRWETVPVSQ. Positions 160–185 form a coiled coil; sequence ERKLEEKRKETDKNISEAFEDLSKLM.

It belongs to the VPS36 family. As to quaternary structure, component of a complex at least composed of ELL, SNF8/EAP30, VPS25/EAP20 and VPS36/EAP45. Component of the endosomal sorting complex required for transport II (ESCRT-II), composed of SNF8, VPS36 and two copies of VPS25. Interacts with VPS25, SNF8, TSG101 and CHMP6. Interacts (via GLUE domain) with ubiquitin. Interacts with RILPL1 (via the C-terminal domain); which recruits ESCRT-II to the endosome membranes. Interacts with ECPAS.

Its subcellular location is the cytoplasm. It localises to the endosome. The protein localises to the late endosome. It is found in the membrane. The protein resides in the nucleus. Functionally, component of the ESCRT-II complex (endosomal sorting complex required for transport II), which is required for multivesicular body (MVB) formation and sorting of endosomal cargo proteins into MVBs. The MVB pathway mediates delivery of transmembrane proteins into the lumen of the lysosome for degradation. The ESCRT-II complex is probably involved in the recruitment of the ESCRT-III complex. Its ability to bind ubiquitin probably plays a role in endosomal sorting of ubiquitinated cargo proteins by ESCRT complexes. The ESCRT-II complex may also play a role in transcription regulation, possibly via its interaction with ELL. Binds phosphoinosides such as PtdIns(3,4,5)P3. In Rattus norvegicus (Rat), this protein is Vacuolar protein-sorting-associated protein 36 (Vps36).